The sequence spans 172 residues: MDRAQKEKLVDELGQIFESSGVVVVAHYAGLTVAEMQDFRARMREAGGSVRVAKNRLAKIALQGKPNEKIGELLTGMTVLAYSEDPVAAAKVADAYAKDNSKYQILGGAMGEDYLDQAGVKAVASMPSREELIAQIASCIGAPASNIAGAIGAPASNIASILSTIEEKAEAA.

The protein belongs to the universal ribosomal protein uL10 family. In terms of assembly, part of the ribosomal stalk of the 50S ribosomal subunit. The N-terminus interacts with L11 and the large rRNA to form the base of the stalk. The C-terminus forms an elongated spine to which L12 dimers bind in a sequential fashion forming a multimeric L10(L12)X complex.

Its function is as follows. Forms part of the ribosomal stalk, playing a central role in the interaction of the ribosome with GTP-bound translation factors. This Dinoroseobacter shibae (strain DSM 16493 / NCIMB 14021 / DFL 12) protein is Large ribosomal subunit protein uL10.